The primary structure comprises 310 residues: tRNA pseudouridine synthase B (310 aa).

Aspartate 38 serves as the catalytic Nucleophile.

The protein belongs to the pseudouridine synthase TruB family. Type 1 subfamily.

It carries out the reaction uridine(55) in tRNA = pseudouridine(55) in tRNA. Its function is as follows. Responsible for synthesis of pseudouridine from uracil-55 in the psi GC loop of transfer RNAs. In Geotalea uraniireducens (strain Rf4) (Geobacter uraniireducens), this protein is tRNA pseudouridine synthase B.